We begin with the raw amino-acid sequence, 156 residues long: Ribosomal RNA large subunit methyltransferase H (156 aa).

Residues leucine 72, glycine 104, and 123–128 each bind S-adenosyl-L-methionine; that span reads LGPMTF.

It belongs to the RNA methyltransferase RlmH family. As to quaternary structure, homodimer.

Its subcellular location is the cytoplasm. The enzyme catalyses pseudouridine(1915) in 23S rRNA + S-adenosyl-L-methionine = N(3)-methylpseudouridine(1915) in 23S rRNA + S-adenosyl-L-homocysteine + H(+). Its function is as follows. Specifically methylates the pseudouridine at position 1915 (m3Psi1915) in 23S rRNA. This Nitratidesulfovibrio vulgaris (strain ATCC 29579 / DSM 644 / CCUG 34227 / NCIMB 8303 / VKM B-1760 / Hildenborough) (Desulfovibrio vulgaris) protein is Ribosomal RNA large subunit methyltransferase H.